The primary structure comprises 101 residues: MIPGEYQLAEGDILANVGRKTVKIEVTNSGDRPIQVGSHYHFFETNNALKFDRTLARGMRLNVPSGNAVRFEPGEVKSVELVAFGGNQIIYGFHNQIDGKL.

It belongs to the urease beta subunit family. Heterotrimer of UreA (gamma), UreB (beta) and UreC (alpha) subunits. Three heterotrimers associate to form the active enzyme.

The protein resides in the cytoplasm. It carries out the reaction urea + 2 H2O + H(+) = hydrogencarbonate + 2 NH4(+). It functions in the pathway nitrogen metabolism; urea degradation; CO(2) and NH(3) from urea (urease route): step 1/1. This Haemophilus influenzae (strain 86-028NP) protein is Urease subunit beta.